We begin with the raw amino-acid sequence, 183 residues long: Glutathione-regulated potassium-efflux system ancillary protein KefG (183 aa).

It belongs to the NAD(P)H dehydrogenase (quinone) family. KefG subfamily. Interacts with KefB.

The protein resides in the cell inner membrane. The catalysed reaction is a quinone + NADH + H(+) = a quinol + NAD(+). The enzyme catalyses a quinone + NADPH + H(+) = a quinol + NADP(+). Its function is as follows. Regulatory subunit of a potassium efflux system that confers protection against electrophiles. Required for full activity of KefB. The chain is Glutathione-regulated potassium-efflux system ancillary protein KefG from Salmonella gallinarum (strain 287/91 / NCTC 13346).